Here is a 449-residue protein sequence, read N- to C-terminus: Monoacylglycerol lipase (449 aa).

K82 is covalently cross-linked (Glycyl lysine isopeptide (Lys-Gly) (interchain with G-Cter in ubiquitin)). The AB hydrolase-1 domain occupies 151–392; it reads PMLIILHGLT…LLLETSTGGH (242 aa). The GXSXG signature appears at 230–234; it reads GFSLG. The active-site Nucleophile is S232. Catalysis depends on charge relay system residues D364 and H392.

It belongs to the AB hydrolase superfamily. AB hydrolase 4 family.

It catalyses the reaction Hydrolyzes glycerol monoesters of long-chain fatty acids.. The enzyme catalyses 1-hexadecanoylglycerol + H2O = glycerol + hexadecanoate + H(+). It carries out the reaction 1-octadecanoylglycerol + H2O = octadecanoate + glycerol + H(+). The catalysed reaction is 1-(9Z-octadecenoyl)-glycerol + H2O = glycerol + (9Z)-octadecenoate + H(+). In terms of biological role, converts monoacylglycerides (MAG) to free fatty acids and glycerol. Has a preference for palmitoyl-MAG. Does not play a significant role in ethyl ester biosynthesis. Also possesses ester hydrolase and low but persistent TAG lipase activity. This chain is Monoacylglycerol lipase, found in Saccharomyces cerevisiae (strain ATCC 204508 / S288c) (Baker's yeast).